Here is a 3942-residue protein sequence, read N- to C-terminus: Protein bassoon (3942 aa).

A disordered region spans residues 1–158 (MGNEASLEGG…PTSPYSVPQI (158 aa)). Gly-2 carries N-myristoyl glycine lipidation. The segment covering 9–29 (GGAGEGPLPPGGSGLGPGPGA) has biased composition (gly residues). The span at 31-52 (KPPSALAGGGQLPVAGAARAAG) shows a compositional bias: low complexity. Pro residues predominate over residues 53–71 (PPTPGLGPVPGPGPGPGPG). The 5 X 2 AA tandem repeats of P-G stretch occupies residues 62-71 (PGPGPGPGPG). Polar residues-rich tracts occupy residues 85–98 (SQRTTSPTPKQASA) and 127–154 (QVDSRTQRSGRSPSVSPDRGSTPTSPYS). Phosphoserine is present on Ser-142. At Arg-145 the chain carries Omega-N-methylarginine. 2 consecutive C4-type zinc fingers follow at residues 167-190 (CPICKTSDLTSTPSQPNFNTCTQC) and 195-217 (CNQCGFNPNPHLTQVKEWLCLNC). Disordered regions lie at residues 228-341 (TTAP…EQTQ) and 362-457 (LMSV…KTMP). Over residues 230-240 (APRSKSQQQLH) the composition is skewed to polar residues. Phosphoserine is present on residues Ser-241 and Ser-245. Residues 362 to 379 (LMSVQPEADTQGQPSPSK) are compositionally biased toward polar residues. Pro residues predominate over residues 395 to 407 (PRPPGSGPGPGPT). C4-type zinc fingers lie at residues 464–487 (CPLCQAELNMGSRGPANYNTCTAC) and 492–514 (CNLCGFNPTPHLVEKTEWLCLNC). Disordered regions lie at residues 525-937 (GEPA…LQGG), 950-1258 (GSYG…VAES), 1309-1553 (MDPM…WQQS), and 1573-1625 (RMVH…PSAG). The segment covering 528–541 (APLPLPTPQQPPAG) has biased composition (pro residues). Tandem repeats lie at residues 570–576 (KASPQAT), 577–583 (KASPQAT), 584–590 (KASPQAT), 591–597 (KASPQTT), and 598–604 (KASPQAK). The tract at residues 570-604 (KASPQATKASPQATKASPQATKASPQTTKASPQAK) is 5 X 7 AA tandem repeats of K-A-S-P-Q-[AT]-[AT]. Positions 573–600 (PQATKASPQATKASPQATKASPQTTKAS) are enriched in polar residues. Residues 632 to 645 (VPKPPPETTVPPGT) are compositionally biased toward pro residues. A compositionally biased stretch (polar residues) spans 684–693 (QDLSRSPQSL). The segment covering 694 to 708 (SDTGYSSDGVSSSQS) has biased composition (low complexity). The span at 709 to 718 (EITGVVQQEV) shows a compositional bias: polar residues. Composition is skewed to acidic residues over residues 787–802 (FDSDEELGDILEEDDS) and 865–876 (SAEEDNLEEDDT). Arg-881 bears the Omega-N-methylarginine mark. Basic and acidic residues predominate over residues 895 to 905 (PRPESSQEPKR). Phosphoserine is present on Ser-980. The segment covering 994–1011 (PASTPSYTSGTSPTSLSS) has biased composition (low complexity). Over residues 1049 to 1062 (DSSEEEELREEEEL) the composition is skewed to acidic residues. Phosphoserine is present on residues Ser-1050 and Ser-1051. The span at 1063 to 1076 (LREQEKMREVEQQR) shows a compositional bias: basic and acidic residues. The residue at position 1100 (Ser-1100) is a Phosphoserine. Thr-1102 carries the post-translational modification Phosphothreonine. Ser-1108 and Ser-1114 each carry phosphoserine. Residues 1117–1132 (EELRQAAEMEELHRSS) show a composition bias toward basic and acidic residues. 2 stretches are compositionally biased toward low complexity: residues 1133-1143 (CSEYSPSPSLD) and 1173-1190 (SPTETPSGSSTTPSSGRP). Residues 1192-1207 (KSAEEAYEDMMRKAEM) show a composition bias toward basic and acidic residues. The segment covering 1209–1219 (QRQQGQVAGAR) has biased composition (low complexity). Residues 1226 to 1240 (SQPTGPRSQGSFEYQ) show a composition bias toward polar residues. Ser-1236 is modified (phosphoserine). Low complexity predominate over residues 1333–1343 (SFSTSTSSDSS). O-linked (GlcNAc) threonine glycosylation is present at Thr-1354. Residues 1357–1366 (FAKEPQDPLK) show a composition bias toward basic and acidic residues. Residues 1370 to 1438 (SPVSSTLTSK…TTANYGSQTE (69 aa)) show a composition bias toward polar residues. An O-linked (GlcNAc) threonine glycan is attached at Thr-1395. Phosphoserine occurs at positions 1482, 1491, and 1493. Residues 1488–1498 (STPSESPTFSP) are compositionally biased toward low complexity. 2 stretches are compositionally biased toward polar residues: residues 1508 to 1522 (EFSTQTPSLTLSSDI) and 1573 to 1609 (RMVHASASTSPLCSPTDSQPTSHSYSQTTPPSASQMP). A glycan (O-linked (GlcNAc) serine) is linked at Ser-1707. Residues Arg-1792 and Arg-1796 each carry the omega-N-methylarginine modification. At Arg-1806 the chain carries Asymmetric dimethylarginine; alternate. Residue Arg-1806 is modified to Omega-N-methylarginine; alternate. Residue Arg-1818 is modified to Omega-N-methylarginine. Disordered regions lie at residues 1831–1865 (GVGLKPGPVPEPGAEPHRATPAELRSHAPPGTRKP) and 1926–1977 (PSAP…QRPY). The span at 1844 to 1856 (AEPHRATPAELRS) shows a compositional bias: basic and acidic residues. O-linked (GlcNAc) threonine glycosylation occurs at Thr-1934. Residues Ser-1990 and Ser-2046 each carry the phosphoserine modification. Omega-N-methylarginine occurs at positions 2051 and 2081. Arg-2255, Arg-2265, and Arg-2270 each carry asymmetric dimethylarginine. The O-linked (GlcNAc) threonine glycan is linked to Thr-2318. Disordered regions lie at residues 2327–2378 (PVAP…KQQE), 2476–2504 (EQKQRQKAPFPATCEAPSRGPPPAATELA), and 2524–2663 (TEGP…STTA). A compositionally biased stretch (pro residues) spans 2329–2342 (APAPGPAPAPPPGQ). The span at 2361–2378 (ASEKEEASQEDRQRKQQE) shows a compositional bias: basic and acidic residues. 2 coiled-coil regions span residues 2366–2422 (EASQ…LVQR) and 2453–2483 (LAQQRLQLEQIQQLQQQLQLQLEEQKQRQKA). The O-linked (GlcNAc) threonine glycan is linked to Thr-2524. Positions 2541–2551 (SSASDMSLQTE) are enriched in polar residues. At Ser-2578 the chain carries Phosphoserine. Thr-2595 and Thr-2622 each carry phosphothreonine. Residues 2643–2655 (RHSDSGSDSKHDA) are compositionally biased toward basic and acidic residues. Residue Thr-2700 is glycosylated (O-linked (GlcNAc) threonine). An interaction with DAO region spans residues 2730 to 3278 (EPDGQAQGVA…GGVSGRPGKD (549 aa)). Residues Ser-2811, Ser-2860, and Ser-2866 each carry the phosphoserine modification. The interval 2854 to 2874 (TLQRSLSDPKPLSPTAEESAK) is disordered. O-linked (GlcNAc) threonine glycosylation is present at Thr-2945. A Phosphoserine modification is found at Ser-3022. Disordered stretches follow at residues 3051-3409 (PATP…LTSR), 3431-3560 (YYGV…PRAH), and 3581-3917 (EAYH…KILP). The segment covering 3073 to 3083 (TAGSSGPTQNG) has biased composition (polar residues). The segment covering 3089–3114 (APTYTGPSTYPAPTYPPGTGYPAEPG) has biased composition (low complexity). Residues 3202-3211 (KAPEHPRGSD) are compositionally biased toward basic and acidic residues. A compositionally biased stretch (polar residues) spans 3212 to 3237 (RSSVSQSPAPTYPSDSHYTSLEQNVP). Ser-3301 is modified (phosphoserine). Composition is skewed to basic and acidic residues over residues 3330 to 3342 (GDSDYRHGARADK) and 3372 to 3391 (QGMEQKISKFSPIEEAKDVE). Residue Ser-3382 is modified to Phosphoserine. Residues 3447–3461 (YGSSSRSRMASAYSG) show a composition bias toward low complexity. The span at 3464-3487 (LSSHDYSSRGKGYERERDTAERLQ) shows a compositional bias: basic and acidic residues. Residue Arg-3502 is modified to Omega-N-methylarginine. Low complexity predominate over residues 3520 to 3534 (PLGRPRPAGGALPPG). Basic and acidic residues-rich tracts occupy residues 3549 to 3560 (VQEHVKDGPRAH) and 3592 to 3602 (WFDKPRDARSD). Residues 3652 to 3665 (EHRHHSDHGRHSGR) show a composition bias toward basic residues. Positions 3666 to 3690 (HAGEEPGRRAAKPHARDMGRHEARP) are enriched in basic and acidic residues. Over residues 3750–3820 (TQAQPQMQGR…QARLQPQSQP (71 aa)) the composition is skewed to low complexity. Omega-N-methylarginine is present on Arg-3823. Over residues 3835–3851 (KPQPGPTTAPGPQPAGP) the composition is skewed to pro residues. The segment covering 3856 to 3891 (QASSSKPPAAKAPQQGRAPQAQTTPGPGPAGAKPGA) has biased composition (low complexity).

As to quaternary structure, interacts with PCLO, ERC2/CAST1, RIMS1 and UNC13A. Interacts with TPRG1L. Interacts with DYNLL1 and DYNLL2; these interactions potentially link PTVs to dynein and myosin V motor complexes. Interacts with ATG5; this interaction is important for the regulation of presynaptic autophagy. Interacts (via C-terminus) with TRIO (via N-terminus). Interacts with CTBP1. Interacts with SIAH1; this interaction negatively regulates SIAH1 E3 ligase activity. Interacts (via coiled region) with DAO; the interaction is direct. Myristoylated. The N-terminal myristoylation is not sufficient for presynaptic localization. In terms of tissue distribution, expressed in brain and retina.

The protein localises to the cytoplasm. It is found in the presynaptic active zone. Its subcellular location is the cytoskeleton. It localises to the cytoplasmic vesicle. The protein resides in the secretory vesicle. The protein localises to the synaptic vesicle membrane. Scaffold protein of the presynaptic cytomatrix at the active zone (CAZ) which is the place in the synapse where neurotransmitter is released. After synthesis, participates in the formation of Golgi-derived membranous organelles termed Piccolo-Bassoon transport vesicles (PTVs) that are transported along axons to sites of nascent synaptic contacts. At the presynaptic active zone, regulates the spatial organization of synaptic vesicle cluster, the protein complexes that execute membrane fusion and compensatory endocytosis. Also functions in processes other than assembly such as the regulation of specific presynaptic protein ubiquitination by interacting with SIAH1 or the regulation of presynaptic autophagy by associating with ATG5. Also mediates synapse to nucleus communication leading to reconfiguration of gene expression by associating with the transcriptional corepressor CTBP1 and by subsequently reducing the size of its pool available for nuclear import. Inhibits the activity of the proportion of DAO enzyme that localizes to the presynaptic active zone, which may modulate synaptic transmission. The sequence is that of Protein bassoon from Mus musculus (Mouse).